A 227-amino-acid chain; its full sequence is PKHD-type hydroxylase M446_1130 (227 aa).

Residues 78–178 (QIFPPLFNRY…RVASFFWLQS (101 aa)) form the Fe2OG dioxygenase domain. Fe cation contacts are provided by histidine 96, aspartate 98, and histidine 159. 2-oxoglutarate is bound at residue arginine 169.

Fe(2+) is required as a cofactor. The cofactor is L-ascorbate.

In Methylobacterium sp. (strain 4-46), this protein is PKHD-type hydroxylase M446_1130.